We begin with the raw amino-acid sequence, 215 residues long: Nucleoside triphosphate pyrophosphatase (215 aa).

Aspartate 77 (proton acceptor) is an active-site residue.

The protein belongs to the Maf family. A divalent metal cation is required as a cofactor.

The protein resides in the cytoplasm. The catalysed reaction is a ribonucleoside 5'-triphosphate + H2O = a ribonucleoside 5'-phosphate + diphosphate + H(+). The enzyme catalyses a 2'-deoxyribonucleoside 5'-triphosphate + H2O = a 2'-deoxyribonucleoside 5'-phosphate + diphosphate + H(+). Nucleoside triphosphate pyrophosphatase. May have a dual role in cell division arrest and in preventing the incorporation of modified nucleotides into cellular nucleic acids. This chain is Nucleoside triphosphate pyrophosphatase, found in Rickettsia peacockii (strain Rustic).